We begin with the raw amino-acid sequence, 582 residues long: Protein alan shepard (582 aa).

The span at 1–12 (MHPRYSPAPPPQ) shows a compositional bias: pro residues. The tract at residues 1-73 (MHPRYSPAPP…AAPPTSRSAF (73 aa)) is disordered. Tyrosine 5 bears the Phosphotyrosine mark. Low complexity predominate over residues 13–24 (QQQQMGGPLHQQ). Residues 25–36 (QGGGGGGGGGIR) are compositionally biased toward gly residues. The span at 39 to 57 (SNAQQLPPQIPRSQNYSNG) shows a compositional bias: polar residues. The span at 58–72 (SSSSAAAAPPTSRSA) shows a compositional bias: low complexity. Residues tyrosine 125 and tyrosine 142 each carry the phosphotyrosine modification. The segment at 164–225 (PATTTYGQRV…TVQNQNQQGG (62 aa)) is disordered. Residues 178–225 (SPSNTNSSSSSNTGSQSGTLSTSLSNTTNTNTNMGPNGTVQNQNQQGG) show a composition bias toward low complexity. RRM domains follow at residues 231–304 (TNLY…MAKQ) and 310–389 (TNLY…FADG). The disordered stretch occupies residues 555–582 (PMTDSEQASTAASPDEAYTQYPHQAAPK).

In terms of biological role, has a role in the perception of gravity. In Drosophila yakuba (Fruit fly), this protein is Protein alan shepard.